The primary structure comprises 139 residues: Insulin-like growth factor (139 aa).

An N-terminal signal peptide occupies residues 1-38 (YIRRVRQGSIYSLLVESQQWCKLTLTLLLLLALLTRCT). The b stretch occupies residues 39–67 (LSETLCGSELVDTLQFVCDDRGFFFVPQH). The interval 68-82 (VPPRRGAHRRSRARK) is c. Positions 83–103 (GIVEECCFKGCSLRLLEMYCA) are a. The interval 104–113 (RPSKAERDVA) is d. The tract at residues 108–139 (AERDVARPRQRPHRASQHSRRGSQSRGRGRSR) is disordered. The interval 114–139 (RPRQRPHRASQHSRRGSQSRGRGRSR) is e. Over residues 115-139 (PRQRPHRASQHSRRGSQSRGRGRSR) the composition is skewed to basic residues.

This sequence belongs to the insulin family.

The protein resides in the secreted. Its function is as follows. The insulin-like growth factors, isolated from plasma, are structurally and functionally related to insulin but have a much higher growth-promoting activity. The polypeptide is Insulin-like growth factor (Myxine glutinosa (Atlantic hagfish)).